The following is a 105-amino-acid chain: Large ribosomal subunit protein uL24 (105 aa).

This sequence belongs to the universal ribosomal protein uL24 family. In terms of assembly, part of the 50S ribosomal subunit.

In terms of biological role, one of two assembly initiator proteins, it binds directly to the 5'-end of the 23S rRNA, where it nucleates assembly of the 50S subunit. Functionally, one of the proteins that surrounds the polypeptide exit tunnel on the outside of the subunit. The chain is Large ribosomal subunit protein uL24 from Xanthobacter autotrophicus (strain ATCC BAA-1158 / Py2).